A 147-amino-acid chain; its full sequence is Small ribosomal subunit protein eS19 (147 aa).

It belongs to the eukaryotic ribosomal protein eS19 family. In terms of assembly, component of the small ribosomal subunit.

It is found in the cytoplasm. It localises to the nucleus. Component of the small ribosomal subunit. The ribosome is a large ribonucleoprotein complex responsible for the synthesis of proteins in the cell. Required for pre-rRNA processing and maturation of 40S ribosomal subunits. In Gillichthys mirabilis (Long-jawed mudsucker), this protein is Small ribosomal subunit protein eS19 (rps19).